The chain runs to 82 residues: Small ribosomal subunit protein bS18 (82 aa).

Residues 1–20 (MAEVSSSTVRRPFHRRRKTC) are disordered.

It belongs to the bacterial ribosomal protein bS18 family. In terms of assembly, part of the 30S ribosomal subunit. Forms a tight heterodimer with protein bS6.

Binds as a heterodimer with protein bS6 to the central domain of the 16S rRNA, where it helps stabilize the platform of the 30S subunit. The polypeptide is Small ribosomal subunit protein bS18 (Allorhizobium ampelinum (strain ATCC BAA-846 / DSM 112012 / S4) (Agrobacterium vitis (strain S4))).